A 34-amino-acid chain; its full sequence is Photosystem II reaction center protein Psb30 (34 aa).

A helical membrane pass occupies residues 6–26 (VVFQLMALFFVLAAGPAVVVL).

This sequence belongs to the Psb30/Ycf12 family. PSII is composed of 1 copy each of membrane proteins PsbA, PsbB, PsbC, PsbD, PsbE, PsbF, PsbH, PsbI, PsbJ, PsbK, PsbL, PsbM, PsbT, PsbX, PsbY, PsbZ, Psb30/Ycf12, peripheral proteins of the oxygen-evolving complex and a large number of cofactors. It forms dimeric complexes.

It localises to the plastid. Its subcellular location is the chloroplast thylakoid membrane. Its function is as follows. A core subunit of photosystem II (PSII), probably helps stabilize the reaction center. This is Photosystem II reaction center protein Psb30 from Stigeoclonium helveticum (Green alga).